A 722-amino-acid chain; its full sequence is Zinc finger protein 219 (722 aa).

Residues Met-1 to Asp-21 are disordered. Phosphoserine is present on Ser-16. C2H2-type zinc fingers lie at residues Phe-57 to His-79 and Phe-85 to His-107. The disordered stretch occupies residues Ala-137 to Ser-160. 2 consecutive C2H2-type zinc fingers follow at residues Phe-163 to His-186 and Trp-189 to His-212. The segment at Pro-215 to Arg-275 is disordered. Pro residues-rich tracts occupy residues Ala-225–Glu-247 and Thr-259–Pro-272. C2H2-type zinc fingers lie at residues Phe-274–His-296 and His-302–His-324. Residues Leu-384–Ala-495 form a disordered region. A compositionally biased stretch (gly residues) spans Arg-390–Phe-404. Over residues Glu-425–Glu-438 the composition is skewed to acidic residues. The span at Ser-463 to Gln-477 shows a compositional bias: low complexity. 2 C2H2-type zinc fingers span residues Lys-498–His-520 and Tyr-526–His-548. Disordered stretches follow at residues Lys-542–Cys-648 and His-668–Arg-722. A compositionally biased stretch (pro residues) spans Pro-558–Ser-568. The span at Gly-634–Gly-643 shows a compositional bias: gly residues. The C2H2-type 9 zinc-finger motif lies at His-646–His-668. A compositionally biased stretch (basic residues) spans His-668–Arg-677. The residue at position 692 (Ser-692) is a Phosphoserine. At Thr-695 the chain carries Phosphothreonine. Ser-698 carries the phosphoserine modification.

It belongs to the krueppel C2H2-type zinc-finger protein family. Interacts with SOX9 (via C-terminus). Ubiquitous.

The protein resides in the nucleus. Functionally, transcriptional regulator. Recognizes and binds 2 copies of the core DNA sequence motif 5'-GGGGG-3'. Binds to the HMGN1 promoter and may repress HMGN1 expression. Regulates SNCA expression in primary cortical neurons. Binds to the COL2A1 promoter and activates COL2A1 expression, as part of a complex with SOX9. Plays a role in chondrocyte differentiation. This is Zinc finger protein 219 (ZNF219) from Homo sapiens (Human).